The primary structure comprises 418 residues: MEKTQSVFIRFIVNGSLVKQILIGLVAGIVLALVSTPAAIAVGLLGSLFVGALKAVAPVLVLMLVIASIANHKKGQKTSIRPILFLYVLGAFSAALVAVVVSFIYPSTLILVAESADITPPSGIVEVLHGLLNSIIANPIHALLNANYIGILAWAVGLGIALRHAADTTKALINDMSDAVTLVVRVVIRFAPLGIFGLVASTIAATGFGALQLYVQLLVVLIGCMLLVALVVNPLIVYWKIRRNPYPLVFACLRESGVTAFFTRSSAANIPVNMEMCKKMNLNEDTYSISIPLGATINMAGAAITITVLTLAAVHTLGITVDLPTALLLSVVAAVCACGASGVAGGSLLLIPLACSMFGIPNDVAMQVVGVGFIIGVLQDSAETALNSSTDVLFTAAVCQAEDAKLANPDALAAGKSV.

8 helical membrane passes run 21 to 41, 49 to 69, 83 to 103, 142 to 162, 190 to 210, 217 to 237, 299 to 319, and 331 to 351; these read ILIG…AAIA, FVGA…IASI, ILFL…VVSF, ALLN…GIAL, FAPL…GFGA, LLVV…PLIV, MAGA…TLGI, and VVAA…LLLI.

This sequence belongs to the dicarboxylate/amino acid:cation symporter (DAACS) (TC 2.A.23) family.

The protein localises to the cell inner membrane. The enzyme catalyses L-serine(in) + Na(+)(in) = L-serine(out) + Na(+)(out). The catalysed reaction is L-threonine(in) + Na(+)(in) = L-threonine(out) + Na(+)(out). Its function is as follows. Involved in the import of serine and threonine into the cell, with the concomitant import of sodium (symport system). The polypeptide is Serine/threonine transporter SstT (Yersinia pseudotuberculosis serotype O:1b (strain IP 31758)).